The chain runs to 822 residues: Serine/threonine-protein kinase kin-29 (822 aa).

The Protein kinase domain occupies 16 to 267 (YDVGRAIGKG…IQNVLQHRWM (252 aa)). Residues 22 to 30 (IGKGNFATV) and Lys45 each bind ATP. Catalysis depends on Asp138, which acts as the Proton acceptor. Disordered regions lie at residues 348–367 (EGTGEEFPRRGSRGSILSGK), 389–423 (LSSPDCDSDDSSNSDLCDDSPMSSMGPMNHERQFG), and 577–602 (NPIPRYQRTPYTKAPPAERRSSWASP). Over residues 394–406 (CDSDDSSNSDLCD) the composition is skewed to acidic residues.

The protein belongs to the protein kinase superfamily. CAMK Ser/Thr protein kinase family. SNF1 subfamily. In terms of assembly, interacts with tax-6. It depends on Mg(2+) as a cofactor. Post-translationally, autophosphorylated. Elevated cAMP levels appears to act via PKA to directly or indirectly phosphorylate multiple sites on kin-29 and inhibit function. In terms of tissue distribution, primarily neuronal, with additional expression in body wall muscle and hypodermal cells. Among neuronal cells, expressed in multiple sensory neurons and interneurons in the lateral, anterior, and lumbar ganglia, as well as in motor neurons in the ventral motor cord. Present in the AWB and AWC olfactory neurons.

The protein localises to the cytoplasm. It localises to the nucleus. The catalysed reaction is L-seryl-[protein] + ATP = O-phospho-L-seryl-[protein] + ADP + H(+). The enzyme catalyses L-threonyl-[protein] + ATP = O-phospho-L-threonyl-[protein] + ADP + H(+). Regulates chemoreceptor expression by phosphorylating the hda-4 class II histone deacetylase (HDAC) and inhibiting the gene repression functions of hda-4 and the mef-2 transcription factor, enabling the correct sensing and transduction of food signals. Role in determining body size, the dauer decision and serotonin-mediated egg laying. May modulate the Sma/Mab pathway and regulates development in the later larval stages. The polypeptide is Serine/threonine-protein kinase kin-29 (Caenorhabditis elegans).